Here is a 616-residue protein sequence, read N- to C-terminus: Auxin efflux carrier component 4 (616 aa).

The Extracellular segment spans residues 1–7; that stretch reads MITWHDL. The chain crosses the membrane as a helical span at residues 8 to 28; the sequence is YTVLTAVVPLYVAMILAYGSV. Over 29–38 the chain is Cytoplasmic; the sequence is QWWKIFSPDQ. A helical transmembrane segment spans residues 39-59; that stretch reads CSGINRFVAIFAVPLLSFHFI. Valine 51 is a (indol-3-yl)acetate binding site. The Extracellular segment spans residues 60–70; the sequence is STNDPYAMNFR. Residues 71–91 form a helical membrane-spanning segment; sequence FVAADTLQKIIMLVLLALWAN. At 92–101 the chain is on the cytoplasmic side; that stretch reads LTKNGSLEWM. Residues 102 to 122 traverse the membrane as a helical segment; the sequence is ITIFSLSTLPNTLVMGIPLLI. Asparagine 112 and leucine 114 together coordinate (indol-3-yl)acetate. The Extracellular segment spans residues 123–131; that stretch reads AMYGTYAGS. The chain crosses the membrane as a helical span at residues 132–152; sequence LMVQVVVLQCIIWYTLLLFLF. (indol-3-yl)acetate is bound at residue tyrosine 145. Residues 153-476 lie on the Cytoplasmic side of the membrane; it reads EYRGAKLLIM…LIRNPNTYSS (324 aa). Serine 223, serine 240, and serine 280 each carry phosphoserine. The segment at 302-343 is disordered; it reads AAGSYPAPNPEFSTGTGVSTKPNKIPKENQQQLQEKDSKASH. Residues 312–334 show a composition bias toward polar residues; sequence EFSTGTGVSTKPNKIPKENQQQL. Serine 358 and serine 395 each carry phosphoserine. Residues 390 to 411 form a disordered region; sequence DQPRKSNARGGGDDIGGLDSGE. Residues 398–409 show a composition bias toward gly residues; sequence RGGGDDIGGLDS. The helical transmembrane segment at 477 to 497 threads the bilayer; it reads LIGLIWALVAYRWHVAMPKIL. Residues 498–500 lie on the Extracellular side of the membrane; sequence QQS. A helical membrane pass occupies residues 501–521; sequence ISILSDAGLGMAMFSLGLFMA. Residues 522–535 are Cytoplasmic-facing; it reads LQPKIIACGNSVAT. Residues 536 to 556 traverse the membrane as a helical segment; sequence FAMAVRFITGPAIMAVAGIAI. The Extracellular portion of the chain corresponds to 557–561; it reads GLHGD. A helical membrane pass occupies residues 562–582; the sequence is LLRIAIVQAALPQGIVPFVFA. 2 residues coordinate (indol-3-yl)acetate: isoleucine 576 and valine 577. At 583 to 595 the chain is on the cytoplasmic side; the sequence is KEYNVHPTILSTG. A helical transmembrane segment spans residues 596 to 616; that stretch reads VIFGMLIALPITLVYYILLGL.

It belongs to the auxin efflux carrier (TC 2.A.69.1) family. In terms of assembly, homodimer. As to expression, expressed in the quiescent center precursors and surrounding cells. Present in columella cells of primary roots. Detected in pollen.

The protein resides in the cell membrane. Its function is as follows. Acts as a component of the auxin efflux carrier. Plays a role in generating a sink for auxin into columella cells. Maintains the endogenous auxin gradient, which is essential for correct root patterning. Involved in EXO70A3-regulated gravitropic responses in columella cells and in root system architecture (RSA). Together with PIN3 and PIN7, involved in the connective auxin transport (CAT) that ensures communication across the shoot system, and modulates strigolactone-mediated shoot branching control. The abcb19 pin3 pin4 pin7 quadruple mutant exhibits an additive phenotype on strigolactone-mediated bud outgrowth responses and shoot branching control. This is Auxin efflux carrier component 4 from Arabidopsis thaliana (Mouse-ear cress).